The primary structure comprises 295 residues: Cytidine deaminase (295 aa).

CMP/dCMP-type deaminase domains lie at 48–168 (TDSE…FGPA) and 187–295 (KETD…YVAA). Position 89 to 91 (89 to 91 (NME)) interacts with substrate. A Zn(2+)-binding site is contributed by His102. Catalysis depends on Glu104, which acts as the Proton donor. Positions 129 and 132 each coordinate Zn(2+).

This sequence belongs to the cytidine and deoxycytidylate deaminase family. Homodimer. Zn(2+) is required as a cofactor.

It carries out the reaction cytidine + H2O + H(+) = uridine + NH4(+). The catalysed reaction is 2'-deoxycytidine + H2O + H(+) = 2'-deoxyuridine + NH4(+). Its function is as follows. This enzyme scavenges exogenous and endogenous cytidine and 2'-deoxycytidine for UMP synthesis. The protein is Cytidine deaminase of Photobacterium profundum (strain SS9).